The chain runs to 158 residues: Transcription elongation factor GreA (158 aa).

Residues 41-61 (GDLSENAEYHAAKEDQSHNEG) form a disordered region. A coiled-coil region spans residues 51–74 (AAKEDQSHNEGRIAELEDKLARAE).

The protein belongs to the GreA/GreB family.

In terms of biological role, necessary for efficient RNA polymerase transcription elongation past template-encoded arresting sites. The arresting sites in DNA have the property of trapping a certain fraction of elongating RNA polymerases that pass through, resulting in locked ternary complexes. Cleavage of the nascent transcript by cleavage factors such as GreA or GreB allows the resumption of elongation from the new 3'terminus. GreA releases sequences of 2 to 3 nucleotides. This is Transcription elongation factor GreA from Nitrobacter hamburgensis (strain DSM 10229 / NCIMB 13809 / X14).